The sequence spans 2145 residues: Glutamate synthase [NADH] (2145 aa).

A propeptide spanning residues 1 to 53 is cleaved from the precursor; sequence MPVLKSDNFDPLEEAYEGGTIQNYNDEHHLHKSWANVIPDKRGLYDPDYEHDA. C54 functions as the For GATase activity in the catalytic mechanism. A Glutamine amidotransferase type-2 domain is found at 54 to 455; that stretch reads CGVGFVANKH…PGDLFLVDTQ (402 aa). Residue 1132 to 1189 participates in FMN binding; it reads LAETHQTLVLNDLRRNVVVQTDGQLRTGFDIAVAVLLGAESFTLATVPLIAMGCVMLR. [3Fe-4S] cluster-binding residues include C1185, C1191, and C1196. A coiled-coil region spans residues 1551 to 1600; that stretch reads KKVLLKEKAEAAKAKAKATSEYLKKFRSNQEVDDEVNTLLIANQKAKEQE. An NAD(+)-binding site is contributed by 1928–1942; sequence GGGDTGNDCLGTSVR. A Phosphothreonine modification is found at T2070.

It belongs to the glutamate synthase family. In terms of assembly, homotrimer. [3Fe-4S] cluster serves as cofactor. Requires FAD as cofactor. The cofactor is FMN.

The enzyme catalyses 2 L-glutamate + NAD(+) = L-glutamine + 2-oxoglutarate + NADH + H(+). Its pathway is amino-acid biosynthesis; L-glutamate biosynthesis via GLT pathway; L-glutamate from 2-oxoglutarate and L-glutamine (NAD(+) route): step 1/1. It functions in the pathway energy metabolism; nitrogen metabolism. With respect to regulation, inhibited by homocysteine sulfonamide. Forms L-glutamate from L-glutamine and 2-oxoglutarate. Represents an alternative pathway to L-glutamate dehydrogenase for the biosynthesis of L-glutamate. Participates with glutamine synthetase in ammonia assimilation processes. The enzyme is specific for NADH, L-glutamine and 2-oxoglutarate. The protein is Glutamate synthase [NADH] (GLT1) of Saccharomyces cerevisiae (strain ATCC 204508 / S288c) (Baker's yeast).